The sequence spans 521 residues: GMP synthase [glutamine-hydrolyzing] (521 aa).

The region spanning 8-203 is the Glutamine amidotransferase type-1 domain; the sequence is KILILDFGAQ…VVDVCGCQTL (196 aa). Catalysis depends on cysteine 85, which acts as the Nucleophile. Active-site residues include histidine 177 and glutamate 179. The GMPS ATP-PPase domain maps to 204 to 396; the sequence is WTAANIIEDQ…LGLPRTMVYR (193 aa). 231–237 serves as a coordination point for ATP; that stretch reads SGGVDSS.

Homodimer.

It catalyses the reaction XMP + L-glutamine + ATP + H2O = GMP + L-glutamate + AMP + diphosphate + 2 H(+). The protein operates within purine metabolism; GMP biosynthesis; GMP from XMP (L-Gln route): step 1/1. Functionally, catalyzes the synthesis of GMP from XMP. This chain is GMP synthase [glutamine-hydrolyzing], found in Xanthomonas axonopodis pv. citri (strain 306).